The following is a 308-amino-acid chain: Acetyl-coenzyme A carboxylase carboxyl transferase subunit beta (308 aa).

One can recognise a CoA carboxyltransferase N-terminal domain in the interval Leu46 to Ala308.

Belongs to the AccD/PCCB family. Acetyl-CoA carboxylase is a heterohexamer composed of biotin carboxyl carrier protein (AccB), biotin carboxylase (AccC) and two subunits each of ACCase subunit alpha (AccA) and ACCase subunit beta (AccD).

It is found in the cytoplasm. It catalyses the reaction N(6)-carboxybiotinyl-L-lysyl-[protein] + acetyl-CoA = N(6)-biotinyl-L-lysyl-[protein] + malonyl-CoA. It participates in lipid metabolism; malonyl-CoA biosynthesis; malonyl-CoA from acetyl-CoA: step 1/1. Component of the acetyl coenzyme A carboxylase (ACC) complex. Biotin carboxylase (BC) catalyzes the carboxylation of biotin on its carrier protein (BCCP) and then the CO(2) group is transferred by the transcarboxylase to acetyl-CoA to form malonyl-CoA. The chain is Acetyl-coenzyme A carboxylase carboxyl transferase subunit beta from Caulobacter sp. (strain K31).